A 214-amino-acid chain; its full sequence is NADH-quinone oxidoreductase subunit C (214 aa).

This sequence belongs to the complex I 30 kDa subunit family. In terms of assembly, NDH-1 is composed of 14 different subunits. Subunits NuoB, C, D, E, F, and G constitute the peripheral sector of the complex.

The protein localises to the cell inner membrane. It carries out the reaction a quinone + NADH + 5 H(+)(in) = a quinol + NAD(+) + 4 H(+)(out). Its function is as follows. NDH-1 shuttles electrons from NADH, via FMN and iron-sulfur (Fe-S) centers, to quinones in the respiratory chain. The immediate electron acceptor for the enzyme in this species is believed to be ubiquinone. Couples the redox reaction to proton translocation (for every two electrons transferred, four hydrogen ions are translocated across the cytoplasmic membrane), and thus conserves the redox energy in a proton gradient. The protein is NADH-quinone oxidoreductase subunit C of Francisella tularensis subsp. tularensis (strain WY96-3418).